The following is a 463-amino-acid chain: NADH-ubiquinone oxidoreductase chain 4 (463 aa).

13 helical membrane-spanning segments follow: residues 24-44, 62-82, 98-118, 119-139, 151-171, 198-218, 232-252, 260-280, 285-305, 310-330, 353-373, 404-424, and 442-462; these read LWAG…IVLN, TISA…LIAS, IIMI…LELI, LFYI…TRWG, FMFY…AIYI, WALS…HLWL, ILAA…IALF, LSLA…VICV, LKAL…AAIF, WGMN…SALF, LLLP…LGLP, VFGA…TPFT, and LHIL…IAWL.

Belongs to the complex I subunit 4 family.

Its subcellular location is the mitochondrion membrane. The enzyme catalyses a ubiquinone + NADH + 5 H(+)(in) = a ubiquinol + NAD(+) + 4 H(+)(out). Core subunit of the mitochondrial membrane respiratory chain NADH dehydrogenase (Complex I) that is believed to belong to the minimal assembly required for catalysis. Complex I functions in the transfer of electrons from NADH to the respiratory chain. The immediate electron acceptor for the enzyme is believed to be ubiquinone. The polypeptide is NADH-ubiquinone oxidoreductase chain 4 (ND4) (Strongylocentrotus purpuratus (Purple sea urchin)).